The following is a 619-amino-acid chain: 2-isopropylmalate synthase (619 aa).

Residues 61 to 336 enclose the Pyruvate carboxyltransferase domain; that stretch reads PRWLSTDLRD…SPNLDFSDLT (276 aa). 4 residues coordinate a divalent metal cation: aspartate 70, histidine 275, histidine 277, and asparagine 311.

This sequence belongs to the alpha-IPM synthase/homocitrate synthase family. LeuA type 2 subfamily. Homodimer. A divalent metal cation is required as a cofactor.

It is found in the cytoplasm. It localises to the mitochondrion. The catalysed reaction is 3-methyl-2-oxobutanoate + acetyl-CoA + H2O = (2S)-2-isopropylmalate + CoA + H(+). It participates in amino-acid biosynthesis; L-leucine biosynthesis; L-leucine from 3-methyl-2-oxobutanoate: step 1/4. Catalyzes the condensation of the acetyl group of acetyl-CoA with 3-methyl-2-oxobutanoate (2-oxoisovalerate) to form 3-carboxy-3-hydroxy-4-methylpentanoate (2-isopropylmalate). This chain is 2-isopropylmalate synthase (LEU4), found in Saccharomyces cerevisiae (strain ATCC 204508 / S288c) (Baker's yeast).